The primary structure comprises 313 residues: Probable cell division protein WhiA (313 aa).

Positions 278-311 (SLKELGKLLDPPLSKSGVNHRLRRIKSIANEIRG) form a DNA-binding region, H-T-H motif.

The protein belongs to the WhiA family.

In terms of biological role, involved in cell division and chromosome segregation. In Halothermothrix orenii (strain H 168 / OCM 544 / DSM 9562), this protein is Probable cell division protein WhiA.